Reading from the N-terminus, the 416-residue chain is 3-isopropylmalate dehydratase large subunit 2 (416 aa).

The [4Fe-4S] cluster site is built by cysteine 296, cysteine 356, and cysteine 359.

Belongs to the aconitase/IPM isomerase family. LeuC type 2 subfamily. Heterodimer of LeuC and LeuD. [4Fe-4S] cluster is required as a cofactor.

The enzyme catalyses (2R,3S)-3-isopropylmalate = (2S)-2-isopropylmalate. Its pathway is amino-acid biosynthesis; L-leucine biosynthesis; L-leucine from 3-methyl-2-oxobutanoate: step 2/4. In terms of biological role, catalyzes the isomerization between 2-isopropylmalate and 3-isopropylmalate, via the formation of 2-isopropylmaleate. The polypeptide is 3-isopropylmalate dehydratase large subunit 2 (Archaeoglobus fulgidus (strain ATCC 49558 / DSM 4304 / JCM 9628 / NBRC 100126 / VC-16)).